An 877-amino-acid chain; its full sequence is Probable alpha/beta-glucosidase agdC (877 aa).

The signal sequence occupies residues 1-14 (MLGSLLLLAPLAGA). N171, N293, and N373 each carry an N-linked (GlcNAc...) asparagine glycan. D422 functions as the Nucleophile in the catalytic mechanism. E425 is an active-site residue. The disordered stretch occupies residues 432-476 (DPCTDPERYSSENNLPPAPPPVRSSSPRPLPGFPADFQPSSASRS). Over residues 447 to 463 (PPAPPPVRSSSPRPLPG) the composition is skewed to pro residues. N508 carries an N-linked (GlcNAc...) asparagine glycan. D573 (proton donor) is an active-site residue. N574, N610, and N744 each carry an N-linked (GlcNAc...) asparagine glycan.

The protein belongs to the glycosyl hydrolase 31 family.

The protein resides in the secreted. It carries out the reaction Hydrolysis of terminal, non-reducing (1-&gt;4)-linked alpha-D-glucose residues with release of alpha-D-glucose.. The enzyme catalyses Hydrolysis of terminal, non-reducing beta-D-glucosyl residues with release of beta-D-glucose.. Its function is as follows. Glucosidase involved in the degradation of cellulosic biomass. Has both alpha- and beta-glucosidase activity. This Aspergillus flavus (strain ATCC 200026 / FGSC A1120 / IAM 13836 / NRRL 3357 / JCM 12722 / SRRC 167) protein is Probable alpha/beta-glucosidase agdC (agdC).